The sequence spans 650 residues: Phosphomethylpyrimidine synthase (650 aa).

Residues N241, M270, Y299, H335, 355-357 (SRG), 396-399 (DGLR), and E435 contribute to the substrate site. Position 439 (H439) interacts with Zn(2+). Y462 contacts substrate. H503 contacts Zn(2+). Residues C583, C586, and C591 each contribute to the [4Fe-4S] cluster site.

It belongs to the ThiC family. Homodimer. [4Fe-4S] cluster is required as a cofactor.

The catalysed reaction is 5-amino-1-(5-phospho-beta-D-ribosyl)imidazole + S-adenosyl-L-methionine = 4-amino-2-methyl-5-(phosphooxymethyl)pyrimidine + CO + 5'-deoxyadenosine + formate + L-methionine + 3 H(+). The protein operates within cofactor biosynthesis; thiamine diphosphate biosynthesis. In terms of biological role, catalyzes the synthesis of the hydroxymethylpyrimidine phosphate (HMP-P) moiety of thiamine from aminoimidazole ribotide (AIR) in a radical S-adenosyl-L-methionine (SAM)-dependent reaction. The protein is Phosphomethylpyrimidine synthase of Pseudoalteromonas translucida (strain TAC 125).